The sequence spans 379 residues: Chorismate synthase (379 aa).

Residues arginine 48 and arginine 54 each contribute to the NADP(+) site. FMN-binding positions include 125–127 (RSS), 241–242 (NA), glycine 286, 301–305 (KPTSS), and arginine 327.

It belongs to the chorismate synthase family. Homotetramer. Requires FMNH2 as cofactor.

The catalysed reaction is 5-O-(1-carboxyvinyl)-3-phosphoshikimate = chorismate + phosphate. The protein operates within metabolic intermediate biosynthesis; chorismate biosynthesis; chorismate from D-erythrose 4-phosphate and phosphoenolpyruvate: step 7/7. Its function is as follows. Catalyzes the anti-1,4-elimination of the C-3 phosphate and the C-6 proR hydrogen from 5-enolpyruvylshikimate-3-phosphate (EPSP) to yield chorismate, which is the branch point compound that serves as the starting substrate for the three terminal pathways of aromatic amino acid biosynthesis. This reaction introduces a second double bond into the aromatic ring system. The sequence is that of Chorismate synthase from Rhodospirillum centenum (strain ATCC 51521 / SW).